Reading from the N-terminus, the 376-residue chain is Succinyl-diaminopimelate desuccinylase (376 aa).

His-67 lines the Zn(2+) pocket. Asp-69 is a catalytic residue. Asp-100 is a Zn(2+) binding site. Catalysis depends on Glu-134, which acts as the Proton acceptor. Residues Glu-135, Glu-163, and His-349 each coordinate Zn(2+).

It belongs to the peptidase M20A family. DapE subfamily. Homodimer. Zn(2+) serves as cofactor. Requires Co(2+) as cofactor.

The enzyme catalyses N-succinyl-(2S,6S)-2,6-diaminopimelate + H2O = (2S,6S)-2,6-diaminopimelate + succinate. Its pathway is amino-acid biosynthesis; L-lysine biosynthesis via DAP pathway; LL-2,6-diaminopimelate from (S)-tetrahydrodipicolinate (succinylase route): step 3/3. Functionally, catalyzes the hydrolysis of N-succinyl-L,L-diaminopimelic acid (SDAP), forming succinate and LL-2,6-diaminopimelate (DAP), an intermediate involved in the bacterial biosynthesis of lysine and meso-diaminopimelic acid, an essential component of bacterial cell walls. This is Succinyl-diaminopimelate desuccinylase from Shewanella denitrificans (strain OS217 / ATCC BAA-1090 / DSM 15013).